A 363-amino-acid chain; its full sequence is G kinase-anchoring protein 1-B (363 aa).

2 disordered regions span residues 17–79 (ALLK…RNLA) and 147–182 (VNGD…VPLK). Positions 50–79 (KTNVNEKKKEKRRKKKEQQQSEANELRNLA) form a coiled coil. Over residues 160-170 (KVNKKDKRKNN) the composition is skewed to basic residues. 2 coiled-coil regions span residues 249–298 (DGKT…QEGE) and 328–348 (AALE…VRYQ).

Belongs to the GKAP1 family.

The protein resides in the golgi apparatus. In terms of biological role, may play a role in the regulation of insulin-dependent IRS1 tyrosine phosphorylation in adipocytes. The protein is G kinase-anchoring protein 1-B (gkap1-b) of Xenopus laevis (African clawed frog).